The primary structure comprises 686 residues: DNA ligase 1 (686 aa).

NAD(+) is bound by residues 35–39 (DFEYD), 84–85 (SL), and Glu119. The active-site N6-AMP-lysine intermediate is Lys121. NAD(+) is bound by residues Arg142, Glu177, Lys293, and Lys317. The Zn(2+) site is built by Cys411, Cys414, Cys429, and Cys434. The BRCT domain maps to 602–686 (RVGEQLAGLT…LAEKGAPPLP (85 aa)).

Belongs to the NAD-dependent DNA ligase family. LigA subfamily. Mg(2+) is required as a cofactor. Mn(2+) serves as cofactor.

The catalysed reaction is NAD(+) + (deoxyribonucleotide)n-3'-hydroxyl + 5'-phospho-(deoxyribonucleotide)m = (deoxyribonucleotide)n+m + AMP + beta-nicotinamide D-nucleotide.. In terms of biological role, DNA ligase that catalyzes the formation of phosphodiester linkages between 5'-phosphoryl and 3'-hydroxyl groups in double-stranded DNA using NAD as a coenzyme and as the energy source for the reaction. It is essential for DNA replication and repair of damaged DNA. The polypeptide is DNA ligase 1 (Deinococcus deserti (strain DSM 17065 / CIP 109153 / LMG 22923 / VCD115)).